A 50-amino-acid polypeptide reads, in one-letter code: Small integral membrane protein 46 (50 aa).

The helical transmembrane segment at 15-37 (TTFQLWLQLLLWAHLAVRFLGYL) threads the bilayer.

It localises to the membrane. This chain is Small integral membrane protein 46, found in Homo sapiens (Human).